The sequence spans 321 residues: uncharacterized protein (321 aa).

The Proton donor role is filled by Y49. Residue H106 participates in substrate binding.

Belongs to the aldo/keto reductase family.

This is an uncharacterized protein from Caenorhabditis elegans.